Consider the following 127-residue polypeptide: Large ribosomal subunit protein bL12 (127 aa).

Residues L93 to Q127 are disordered. Positions V105–I117 are enriched in basic and acidic residues.

This sequence belongs to the bacterial ribosomal protein bL12 family. As to quaternary structure, homodimer. Part of the ribosomal stalk of the 50S ribosomal subunit. Forms a multimeric L10(L12)X complex, where L10 forms an elongated spine to which 2 to 4 L12 dimers bind in a sequential fashion. Binds GTP-bound translation factors.

In terms of biological role, forms part of the ribosomal stalk which helps the ribosome interact with GTP-bound translation factors. Is thus essential for accurate translation. This Salinibacter ruber (strain DSM 13855 / M31) protein is Large ribosomal subunit protein bL12.